Consider the following 334-residue polypeptide: Tryptophan--tRNA ligase (334 aa).

ATP-binding positions include 11 to 13 (QPS) and 19 to 20 (GN). The short motif at 12–20 (PSGELTIGN) is the 'HIGH' region element. D135 contacts L-tryptophan. ATP is bound by residues 147–149 (GED), V186, and 195–199 (KMSKS). The short motif at 195 to 199 (KMSKS) is the 'KMSKS' region element.

This sequence belongs to the class-I aminoacyl-tRNA synthetase family. In terms of assembly, homodimer.

It localises to the cytoplasm. The enzyme catalyses tRNA(Trp) + L-tryptophan + ATP = L-tryptophyl-tRNA(Trp) + AMP + diphosphate + H(+). Catalyzes the attachment of tryptophan to tRNA(Trp). This is Tryptophan--tRNA ligase from Salmonella typhi.